The primary structure comprises 369 residues: Anthranilate phosphoribosyltransferase (369 aa).

Residues glycine 111, 114–115, threonine 119, 121–124, 139–147, and serine 151 contribute to the 5-phospho-alpha-D-ribose 1-diphosphate site; these read GD, NIST, and KHGNRGVSS. Glycine 111 is a binding site for anthranilate. Serine 123 provides a ligand contact to Mg(2+). Asparagine 142 provides a ligand contact to anthranilate. Arginine 197 lines the anthranilate pocket. Mg(2+) contacts are provided by aspartate 256 and glutamate 257.

Belongs to the anthranilate phosphoribosyltransferase family. In terms of assembly, homodimer. It depends on Mg(2+) as a cofactor.

The catalysed reaction is N-(5-phospho-beta-D-ribosyl)anthranilate + diphosphate = 5-phospho-alpha-D-ribose 1-diphosphate + anthranilate. It functions in the pathway amino-acid biosynthesis; L-tryptophan biosynthesis; L-tryptophan from chorismate: step 2/5. Its function is as follows. Catalyzes the transfer of the phosphoribosyl group of 5-phosphorylribose-1-pyrophosphate (PRPP) to anthranilate to yield N-(5'-phosphoribosyl)-anthranilate (PRA). This chain is Anthranilate phosphoribosyltransferase, found in Cupriavidus pinatubonensis (strain JMP 134 / LMG 1197) (Cupriavidus necator (strain JMP 134)).